The primary structure comprises 432 residues: Cyclin-A2 (432 aa).

An N-acetylmethionine modification is found at Met1. Ser5 carries the phosphoserine modification. Disordered regions lie at residues Leu26–Arg45 and Ser55–Leu75. Ser55 is modified (phosphoserine).

Belongs to the cyclin family. Cyclin AB subfamily. In terms of assembly, interacts with the CDK1 and CDK2 protein kinases to form serine/threonine kinase holoenzyme complexes. Interacts with CDK1 (hyperphosphorylated form in G1 and underphosphorylated forms in S and G2). Interacts with CDK2; the interaction increases from G1 to G2. Interacts (associated with CDK2 but not with CDK1) with SCAPER; regulates the activity of CCNA2/CDK2 by transiently maintaining CCNA2 in the cytoplasm. Forms a ternary complex with CDK2 and CDKN1B; CDKN1B inhibits the kinase activity of CDK2 through conformational rearrangements. Interacts with INCA1. (Microbial infection) Interacts with human cytomegalovirus protein UL32. Post-translationally, polyubiquitinated via 'Lys-11'-linked ubiquitin by the anaphase-promoting complex (APC/C), leading to its degradation by the proteasome. Deubiquitinated and stabilized by USP37 enables entry into S phase. Ubiquitinated during the G1 phase by the SCF(FBXO31) complex, leading to its proteasomal degradation.

The protein resides in the nucleus. Its subcellular location is the cytoplasm. Cyclin which controls both the G1/S and the G2/M transition phases of the cell cycle. Functions through the formation of specific serine/threonine protein kinase holoenzyme complexes with the cyclin-dependent protein kinases CDK1 or CDK2. The cyclin subunit confers the substrate specificity of these complexes and differentially interacts with and activates CDK1 and CDK2 throughout the cell cycle. This chain is Cyclin-A2, found in Homo sapiens (Human).